We begin with the raw amino-acid sequence, 166 residues long: FMN reductase (NADH) RutF (166 aa).

Belongs to the non-flavoprotein flavin reductase family. RutF subfamily.

The catalysed reaction is FMNH2 + NAD(+) = FMN + NADH + 2 H(+). Catalyzes the reduction of FMN to FMNH2 which is used to reduce pyrimidine by RutA via the Rut pathway. The sequence is that of FMN reductase (NADH) RutF from Cronobacter sakazakii (strain ATCC BAA-894) (Enterobacter sakazakii).